Here is a 708-residue protein sequence, read N- to C-terminus: Vertnin (708 aa).

2 disordered regions span residues 473–499 (PWKG…FLPP) and 561–636 (APAL…PVAE). Positions 568–582 (GLREAKEKQEKEAGR) are enriched in basic and acidic residues.

This sequence belongs to the vertnin family.

This Ailuropoda melanoleuca (Giant panda) protein is Vertnin (VRTN).